The chain runs to 289 residues: MDQAGIIRDLLIWLEGHLDQPLSLDNVAAKAGYSKWHLQRMFKDVTGHAIGAYIRARRLSKSAVALRLTARPILDIALQYRFDSQQTFTRAFKKQFAQTPALYRRSPEWSAFGIRPPLRLGEFTMPEHKFVTLEDTPLIGVTQSYSCSLEQISDFRHEMRYQFWHDFLGNAPTIPPVLYGLNETRPSQDKDDEQEVFYTTALAQDQADGYVLTGHPVMLQGGEYVMFTYEGLGTGVQEFILTVYGTCMPMLNLTRRKGQDIERYYPAEDAKAGDRPINLRCELLIPIRR.

The 99-residue stretch at 8-106 folds into the HTH araC/xylS-type domain; it reads RDLLIWLEGH…AQTPALYRRS (99 aa). DNA-binding regions (H-T-H motif) lie at residues 25-46 and 73-96; these read DNVA…KDVT and ILDI…KKQF.

Transcriptional regulator. Binds to the right arm of the replication origin oriC of the chromosome. Rob binding may influence the formation of the nucleoprotein structure, required for oriC function in the initiation of replication. The chain is Right origin-binding protein (rob) from Escherichia coli O157:H7.